Reading from the N-terminus, the 89-residue chain is Bombyxin B-1 (89 aa).

A signal peptide spans 1–19 (MKTSVMFMLVIVISLMCSG). Cystine bridges form between C29/C75, C41/C88, and C74/C79. A propeptide spans 48–66 (GGAQYAPYFWTRQYLGSRG) (c peptide like).

This sequence belongs to the insulin family. Heterodimer of a B chain and an A chain linked by two disulfide bonds.

The protein resides in the secreted. Functionally, brain peptide responsible for activation of prothoracic glands to produce ecdysone in insects. This is Bombyxin B-1 (BBXB1) from Bombyx mori (Silk moth).